The sequence spans 334 residues: Glyceraldehyde-3-phosphate dehydrogenase 2 (334 aa).

NAD(+) is bound by residues Arg-12–Ile-13, Asp-35, and Arg-79. Residues Ser-152–Thr-154, Thr-183, Arg-198, Ser-211–Gly-212, and Arg-234 each bind D-glyceraldehyde 3-phosphate. Cys-153 (nucleophile) is an active-site residue. Asn-315 is a binding site for NAD(+).

This sequence belongs to the glyceraldehyde-3-phosphate dehydrogenase family. In terms of assembly, homotetramer.

Its subcellular location is the cytoplasm. The catalysed reaction is D-glyceraldehyde 3-phosphate + phosphate + NAD(+) = (2R)-3-phospho-glyceroyl phosphate + NADH + H(+). Its pathway is carbohydrate degradation; glycolysis; pyruvate from D-glyceraldehyde 3-phosphate: step 1/5. Its activity is regulated as follows. Inhibited by pentalenolactone (PL). In terms of biological role, catalyzes the oxidative phosphorylation of glyceraldehyde 3-phosphate (G3P) to 1,3-bisphosphoglycerate (BPG) using the cofactor NAD. The first reaction step involves the formation of a hemiacetal intermediate between G3P and a cysteine residue, and this hemiacetal intermediate is then oxidized to a thioester, with concomitant reduction of NAD to NADH. The reduced NADH is then exchanged with the second NAD, and the thioester is attacked by a nucleophilic inorganic phosphate to produce BPG. This is Glyceraldehyde-3-phosphate dehydrogenase 2 (gap2) from Streptomyces arenae.